Consider the following 163-residue polypeptide: Iron-sulfur cluster assembly protein 2 (163 aa).

A mitochondrion-targeting transit peptide spans 1–48; the sequence is MMMLRQTSRKAYLGLQASPLGLGRRLYHENVIDHFENPRNVGSFNRND.

This sequence belongs to the NifU family. As to quaternary structure, component of the core Fe-S cluster (ISC) assembly machinery. It depends on [2Fe-2S] cluster as a cofactor. As to expression, mostly expressed in leaves, pollen and flowers.

It localises to the mitochondrion matrix. It participates in cofactor biosynthesis; iron-sulfur cluster biosynthesis. In terms of biological role, scaffold protein for the de novo synthesis of iron-sulfur (Fe-S) clusters within mitochondria, which is required for maturation of both mitochondrial and cytoplasmic [2Fe-2S] and [4Fe-4S] proteins. First, a [2Fe-2S] cluster is transiently assembled on the scaffold protein ISCU (ISU1, ISU2 or ISU3). In a second step, the cluster is released from ISCU, transferred to a glutaredoxin, followed by the formation of mitochondrial [2Fe-2S] proteins, the synthesis of [4Fe-4S] clusters and their target-specific insertion into the recipient apoproteins. Cluster assembly on ISCU depends on the function of the cysteine desulfurase complex NFS1-ISD11, which serves as the sulfur donor for cluster synthesis, the iron-binding protein frataxin as the putative iron donor, and the electron transfer chain comprised of ferredoxin reductase and ferredoxin, which receive their electrons from NADH. The polypeptide is Iron-sulfur cluster assembly protein 2 (ISU2) (Arabidopsis thaliana (Mouse-ear cress)).